Reading from the N-terminus, the 734-residue chain is MKTTNVKNNNNNINNTDEEIKIKNNYNQNDERLKKIKENKFDWALFKRFINIIKILYAKPVIPLTLFLILFGNGFAQTYVSKFTGILLADIYASFTSGDKVFFLSSVLKAGFAIGGSALLAAIINFIVSIMAWNWRKTLCLYIQNVYFKKSLFYKILAFDDRIDNPDQRITSDIDNFTTLLASIVSQCITGPMVVVYYTYLCYTTIDWYAPLIVYGFFFLGYLINKLVMSPMVSINYLQDKLEGDFRSLHQRIRNFSESIALYSLSKEKQHPEKRFDNNDYDHGYESDDSDQSCDESTTIINRKKNKGSQYYKNKNSTSKKINDFIDKLSGDSNDQKEELLVEEEQAKIQFEALLKNKKRVIFWQLGLNTTSDLFTYLSPIANYFIIAIPVFFLNNKSVLQPGDVTVQSYNCIMLASGFSQYINVSQSISDLSGYISRISSMIEVCKKIMEDVSLDADITKLNEKVAQTHNNDAIINTGSSGNISLNNGDSITLDDVTYFTPKGNQLYSKISINVKRGNNLLIMGPSGSGKSSLIRIINGLWPFFKGSIDRPENGDMFFLPQQPYLIFGTLEEQILYPFSKKQKRIPKSIMRELFQRFEIDYLLDRERFIKKSAQVNDLTHNWLNQLSPGEQQLIAIIRLIYHKPKFALMDESTSSIPQSLEERVYYVAKELGITIISVGHRISLLKYHSTLLRFDKDKNWYLEDIINQNNQSNNINNNNNNNTNKIAEDSVFD.

4 helical membrane passes run 52 to 72, 112 to 132, 177 to 197, and 204 to 224; these read IIKILYAKPVIPLTLFLILFG, FAIGGSALLAAIINFIVSIMA, FTTLLASIVSQCITGPMVVVY, and TTIDWYAPLIVYGFFFLGYLI. Residues 63–351 form the ABC transmembrane type-1 domain; that stretch reads PLTLFLILFG…VEEEQAKIQF (289 aa). Residues 271-286 show a composition bias toward basic and acidic residues; that stretch reads HPEKRFDNNDYDHGYE. Residues 271 to 296 form a disordered region; that stretch reads HPEKRFDNNDYDHGYESDDSDQSCDE. Positions 332–359 form a coiled coil; sequence DSNDQKEELLVEEEQAKIQFEALLKNKK. The helical transmembrane segment at 374 to 394 threads the bilayer; that stretch reads LFTYLSPIANYFIIAIPVFFL. In terms of domain architecture, ABC transporter spans 492–729; it reads ITLDDVTYFT…NNNNTNKIAE (238 aa). Position 525–532 (525–532) interacts with ATP; the sequence is GPSGSGKS. The span at 712–725 shows a compositional bias: low complexity; sequence QSNNINNNNNNNTN. Residues 712–734 are disordered; sequence QSNNINNNNNNNTNKIAEDSVFD.

Belongs to the ABC transporter superfamily. ABCD family. Peroxisomal fatty acyl CoA transporter (TC 3.A.1.203) subfamily.

Its subcellular location is the membrane. It carries out the reaction (9Z)-octadecenoyl-CoA(in) = (9Z)-octadecenoyl-CoA(out). The polypeptide is ABC transporter D family member 1 (abcD1) (Dictyostelium discoideum (Social amoeba)).